The primary structure comprises 323 residues: MATEGLAGALATVLGGKGLLVQSCDSEPAGKPLFPVRLRKNVCYVVLAVFLNEQDEVLMIQEAKRECRGTWYLPAGRMEPGETIVEAMQREVKEEAGLLCEPVTLLSVEERGASWIRFVFLARPTGGVLKTSKDADSESLQAGWYPRVSLPTPLRAHDVLHLVELGAKFCQQAMHPLILPQELPCSVVCQRLVTTFTTVQSVWVLVGTVGTPHLPITACGFTPMEQRGGIKVAILRLLQECLTLHSLAVETKGLLGLQHLGRDHVDGVCLNVLVTVAFRNPGIQDEPPKIRGENYFWWKVLEEDLQKLLLYRLQESSVIPLSR.

The Nudix hydrolase domain occupies 37–167 (RLRKNVCYVV…DVLHLVELGA (131 aa)). Residue L58 participates in Mg(2+) binding. Residues 76-97 (GRMEPGETIVEAMQREVKEEAG) carry the Nudix box motif.

The protein belongs to the Nudix hydrolase family. Mn(2+) is required as a cofactor. Requires Mg(2+) as cofactor.

The enzyme catalyses 8-oxo-dGDP + H2O = 8-oxo-dGMP + phosphate + H(+). It catalyses the reaction 8-oxo-dADP + H2O = 8-oxo-dAMP + phosphate + H(+). The catalysed reaction is 2-oxo-dADP + H2O = 2-oxo-dAMP + phosphate + H(+). It carries out the reaction 8-oxo-GDP + H2O = 8-oxo-GMP + phosphate + H(+). In terms of biological role, mediates the hydrolysis of oxidized nucleoside diphosphate derivatives. Hydrolyzes 8-oxo-7,8-dihydroguanine (8-oxo-Gua)-containing deoxyribo- and ribonucleoside diphosphates to the monophosphates. Hydrolyzes 8-oxo-dGDP and 8-oxo-GDP with the same efficiencies. Also hydrolyzes 8-OH-dADP and 2-OH-dADP. Exhibited no or minimal hydrolysis activity against 8-oxo-dGTP, 8-oxo-GTP, dGTP, GTP, dGDP and GDP. Probably removes oxidized guanine nucleotides from both the DNA and RNA precursor pools. This Mus musculus (Mouse) protein is 8-oxo-dGDP phosphatase NUDT18.